Here is a 222-residue protein sequence, read N- to C-terminus: Probable nicotinate-nucleotide adenylyltransferase (222 aa).

Belongs to the NadD family.

The enzyme catalyses nicotinate beta-D-ribonucleotide + ATP + H(+) = deamido-NAD(+) + diphosphate. It functions in the pathway cofactor biosynthesis; NAD(+) biosynthesis; deamido-NAD(+) from nicotinate D-ribonucleotide: step 1/1. Catalyzes the reversible adenylation of nicotinate mononucleotide (NaMN) to nicotinic acid adenine dinucleotide (NaAD). This is Probable nicotinate-nucleotide adenylyltransferase from Stenotrophomonas maltophilia (strain K279a).